The primary structure comprises 129 residues: Capsid protein (129 aa).

The segment at 31–104 (EWISSNSRSQ…FATNSDCELI (74 aa)) is viral RNA-binding.

Belongs to the Leviviricetes capsid protein family. In terms of assembly, homodimer. The capsid proteins form dimers that assemble by group of 5. Twelve such pentamers are linked together with free dimers. The homodimers binds to the viral RNA via an operator hairpin, but also to many other RNA sequences in the viral genome; this interaction probably shifts the virus from the replicative to the assembly phase and ensures specific encapsidation of the viral genome.

The protein localises to the virion. Functionally, capsid protein self-assembles to form an icosahedral capsid with a T=3 symmetry, about 26 nm in diameter, and consisting of 89 capsid proteins dimers (178 capsid proteins). Involved in viral genome encapsidation through the interaction between a capsid protein dimer and the multiple packaging signals present in the RNA genome. The capsid also contains 1 copy of the A2 maturation protein. Its function is as follows. Acts as a translational repressor of viral replicase synthesis late in infection. This latter function is the result of capsid protein interaction with an RNA hairpin which contains the replicase ribosome-binding site. This chain is Capsid protein, found in Enterobacteria phage f2 (Bacteriophage f2).